The following is a 568-amino-acid chain: Periplasmic trehalase (568 aa).

Positions 1–39 (MPHVVARSGDVMSSAAPPSCTSLLGLSLSMFVAPCTLTA) are cleaved as a signal peptide. Substrate contacts are provided by residues Arg-169, 176–177 (WD), Asn-213, 222–224 (RSQ), 294–296 (RPE), and Gly-327. Catalysis depends on proton donor/acceptor residues Asp-329 and Glu-511. Residue Glu-526 participates in substrate binding.

It belongs to the glycosyl hydrolase 37 family.

It is found in the periplasm. The catalysed reaction is alpha,alpha-trehalose + H2O = alpha-D-glucose + beta-D-glucose. Its function is as follows. Provides the cells with the ability to utilize trehalose at high osmolarity by splitting it into glucose molecules that can subsequently be taken up by the phosphotransferase-mediated uptake system. In Xanthomonas oryzae pv. oryzae (strain MAFF 311018), this protein is Periplasmic trehalase.